A 135-amino-acid polypeptide reads, in one-letter code: ATP synthase epsilon chain (135 aa).

Belongs to the ATPase epsilon chain family. F-type ATPases have 2 components, CF(1) - the catalytic core - and CF(0) - the membrane proton channel. CF(1) has five subunits: alpha(3), beta(3), gamma(1), delta(1), epsilon(1). CF(0) has three main subunits: a, b and c.

It is found in the cell inner membrane. Produces ATP from ADP in the presence of a proton gradient across the membrane. The protein is ATP synthase epsilon chain of Rhodopseudomonas palustris (strain BisB5).